The primary structure comprises 549 residues: DNA polymerase lambda (549 aa).

The 100-residue stretch at D17–I116 folds into the BRCT domain. The disordered stretch occupies residues K126–A197. Residues P149–V175 show a composition bias toward basic and acidic residues. Residues S180 to A197 show a composition bias toward polar residues. The DNA-binding stretch occupies residues N233 to Y247. The active site involves H280. The DNA-binding stretch occupies residues G315–T318. Residues R356, S387–R390, and G396–D399 each bind dCTP. The tract at residues R390 to D399 is involved in primer binding. D397, D399, and D464 together coordinate Mn(2+). The tract at residues I438–A479 is DNA-binding. N487 contacts dCTP.

This sequence belongs to the DNA polymerase type-X family. As to quaternary structure, interacts with PCNA. It depends on Mn(2+) as a cofactor. As to expression, expressed in proliferating tissues. Expressed in roots, root apex, young leaves, shoot apical meristem (SAM), flag leaves and panicles.

Its subcellular location is the nucleus. It carries out the reaction DNA(n) + a 2'-deoxyribonucleoside 5'-triphosphate = DNA(n+1) + diphosphate. In terms of biological role, repair polymerase involved in base excision repair (BER) and responsible for repair of lesions that give rise to abasic (AP) sites in DNA. Has both DNA polymerase and terminal transferase activities. Has a 5'-deoxyribose-5-phosphate lyase (dRP lyase) activity. The chain is DNA polymerase lambda from Oryza sativa subsp. japonica (Rice).